Here is a 552-residue protein sequence, read N- to C-terminus: Cycloheximide resistance protein (552 aa).

Residues Val-46 to Gln-70 are disordered. Residues Leu-47–Ser-56 show a composition bias toward polar residues. The next 12 membrane-spanning stretches (helical) occupy residues Ala-100–Tyr-120, Leu-137–Ser-157, Thr-168–Ser-188, Leu-194–Gly-213, Tyr-225–Ile-246, Trp-262–Leu-282, Ile-346–Val-362, Tyr-381–Val-399, Leu-419–Thr-439, Asn-445–Phe-464, Val-477–Ser-494, and Trp-518–Leu-539.

The protein belongs to the major facilitator superfamily. CAR1 family.

Its subcellular location is the membrane. Its function is as follows. Probable transporter. Confers resistance to cycloheximide. In Candida maltosa (Yeast), this protein is Cycloheximide resistance protein (CYHR).